The following is a 184-amino-acid chain: Photosystem I assembly protein Ycf4 (184 aa).

2 consecutive transmembrane segments (helical) span residues 22 to 42 and 57 to 77; these read FFWA…GTSS and ILFF…LFIS.

This sequence belongs to the Ycf4 family.

The protein localises to the plastid. Its subcellular location is the chloroplast thylakoid membrane. In terms of biological role, seems to be required for the assembly of the photosystem I complex. The sequence is that of Photosystem I assembly protein Ycf4 from Nandina domestica (Heavenly bamboo).